Consider the following 1954-residue polypeptide: Chromodomain-helicase-DNA-binding protein 5 (1954 aa).

2 disordered regions span residues 1–134 and 225–338; these read MRGP…PKSS and PLAV…GDGY. Acidic residues-rich tracts occupy residues 17-37 and 72-90; these read EEME…EAFD and NDEL…ESEG. A compositionally biased stretch (basic residues) spans 96 to 115; that stretch reads NKKKKKKLKDKKEKKAKRKK. The span at 227–237 shows a compositional bias: pro residues; the sequence is AVSPPQVPQPV. Residues 251–272 show a composition bias toward basic residues; that stretch reads GVRKKIKGSKDGKKKGKGKKTA. Over residues 291-301 the composition is skewed to acidic residues; the sequence is SEEDEREESDF. The span at 321–330 shows a compositional bias: basic residues; sequence KKSKRRRKKK. 2 PHD-type zinc fingers span residues 343–390 and 416–463; these read QDYC…CEKE and MEFC…CTCP. Residues 343-653 form a histone-binding region; sequence QDYCEVCQQG…HRELMLGEDT (311 aa). A Chromo 1 domain is found at 497–554; it reads LPPPKPLEGIPEREFFVKWAGLSYWHCSWVKELQLELYHTVMYRNYQRKNDMDEPPPF. The disordered stretch occupies residues 549–571; it reads DEPPPFDYGSGDEDGKSEKRKNK. Positions 561–571 are enriched in basic and acidic residues; that stretch reads EDGKSEKRKNK. Positions 592 to 653 constitute a Chromo 2 domain; the sequence is MMIHRILNHS…HRELMLGEDT (62 aa). The Helicase ATP-binding domain occupies 712–896; that stretch reads RFSWAQGTDT…FHLLNFLTPE (185 aa). Residue 725-732 participates in ATP binding; it reads DEMGLGKT. The DEAH box signature appears at 847–850; it reads DEAH. A Helicase C-terminal domain is found at 1028-1193; it reads LLQKMLKKLR…MTKQELDDIL (166 aa). 5 disordered regions span residues 1209–1253, 1351–1411, 1524–1564, 1597–1640, and 1658–1696; these read MSQG…EDSS, YNDA…LPPL, YSTP…APLG, AALD…REEV, and SRGD…KKED. 2 stretches are compositionally biased toward acidic residues: residues 1355–1366 and 1376–1385; these read SQEDQEWQDELS and SEDEDEDFEE. Residue Gln1390 is modified to N5-methylglutamine. Position 1554 is a phosphoserine (Ser1554). The span at 1554-1564 shows a compositional bias: low complexity; it reads SPAHLLPAPLG. Basic and acidic residues-rich tracts occupy residues 1600 to 1627 and 1658 to 1678; these read DRVE…ETEK and SRGD…KEPI.

This sequence belongs to the SNF2/RAD54 helicase family. Component of the nucleosome remodeling and deacetylase (NuRD) repressor complex, composed of core proteins MTA1, MTA2, MTA3, RBBP4, RBBP7, HDAC1, HDAC2, MBD2, MBD3, and peripherally associated proteins CDK2AP1, CDK2AP2, GATAD2A, GATAD2B, CHD3, CHD4 and CHD5. The exact stoichiometry of the NuRD complex is unknown, and some subunits such as MBD2 and MBD3, GATAD2A and GATAD2B, and CHD3, CHD4 and CHD5 define mutually exclusive NuRD complexes. Interacts with HDAC2. Post-translationally, methylated at Gln-1390 by N6AMT1. In terms of tissue distribution, preferentially expressed in total brain, fetal brain, and cerebellum. It is also moderately expressed in the adrenal gland and detected in testis.

Its subcellular location is the nucleus. It is found in the chromosome. The catalysed reaction is ATP + H2O = ADP + phosphate + H(+). In terms of biological role, ATP-dependent chromatin-remodeling factor that binds DNA through histones and regulates gene transcription. May specifically recognize and bind trimethylated 'Lys-27' (H3K27me3) and non-methylated 'Lys-4' of histone H3. Acts as a component of the histone deacetylase NuRD complex which participates in the remodeling of chromatin. Plays a role in the development of the nervous system by activating the expression of genes promoting neuron terminal differentiation. In parallel, it may also positively regulate the trimethylation of histone H3 at 'Lys-27' thereby specifically repressing genes that promote the differentiation into non-neuronal cell lineages. Regulates the expression of genes involved in cell proliferation and differentiation. Downstream activated genes may include CDKN2A that positively regulates the p53/TP53 pathway, which in turn, prevents cell proliferation. In spermatogenesis, it probably regulates histone hyperacetylation and the replacement of histones by transition proteins in chromatin, a crucial step in the condensation of spermatid chromatin and the production of functional spermatozoa. This is Chromodomain-helicase-DNA-binding protein 5 from Homo sapiens (Human).